Consider the following 119-residue polypeptide: Large ribosomal subunit protein bL19c (119 aa).

Belongs to the bacterial ribosomal protein bL19 family.

The protein localises to the plastid. It localises to the chloroplast. This is Large ribosomal subunit protein bL19c from Mesostigma viride (Green alga).